The sequence spans 446 residues: Probable glycine dehydrogenase (decarboxylating) subunit 1 (446 aa).

It belongs to the GcvP family. N-terminal subunit subfamily. As to quaternary structure, the glycine cleavage system is composed of four proteins: P, T, L and H. In this organism, the P 'protein' is a heterodimer of two subunits.

The catalysed reaction is N(6)-[(R)-lipoyl]-L-lysyl-[glycine-cleavage complex H protein] + glycine + H(+) = N(6)-[(R)-S(8)-aminomethyldihydrolipoyl]-L-lysyl-[glycine-cleavage complex H protein] + CO2. Functionally, the glycine cleavage system catalyzes the degradation of glycine. The P protein binds the alpha-amino group of glycine through its pyridoxal phosphate cofactor; CO(2) is released and the remaining methylamine moiety is then transferred to the lipoamide cofactor of the H protein. This Methylocella silvestris (strain DSM 15510 / CIP 108128 / LMG 27833 / NCIMB 13906 / BL2) protein is Probable glycine dehydrogenase (decarboxylating) subunit 1.